Reading from the N-terminus, the 267-residue chain is MLALEAAQLDGPHLSCLYPEGVFYDLDSCKPFSYPDSDGGLDSTWGWTEAPPAPAIAPYEAFDPATAAFSHSQTVQLCYSHGPNPSTYSPMGTLDPAPSLEAPGPGLQVYPPEDFTSQTLGSLAYAPYPSPVLSEEEDIMLDSPALEVSDSESDEALLAGSEGRGSEAGARKKLRLYQFLLGLLLRGDMRECVWWVEPGAGVFQFSSKHKELLARRWGQQKGNRKRMTYQKLARALRNYAKTGEIRKVKRKLTYQFDSALLPASRHV.

The segment at 1–31 (MLALEAAQLDGPHLSCLYPEGVFYDLDSCKP) is TAD1 (Acidic). Residues 41-62 (LDSTWGWTEAPPAPAIAPYEAF) are TAD2. Positions 174–257 (LRLYQFLLGL…VKRKLTYQFD (84 aa)) form a DNA-binding region, ETS.

It belongs to the ETS family. As to quaternary structure, can form homotypic interactions. Interacts with IRF4/Pip. Interacts with JUN. Interacts with TBP. May also interact with CREBBP and EP300. Interacts with NONO/p54(nrb). In terms of tissue distribution, expressed in the medulla of the thymus, the spleen and germinal centers of the lymph nodes. Expressed in B-cells and T-cells, expression increases during B-cell maturation and decreases during T-cell maturation.

It is found in the nucleus. Functionally, sequence specific transcriptional activator which binds to the PU-box, a purine-rich DNA sequence (5'-GAGGAA-3') that can act as a lymphoid-specific enhancer. Promotes development of plasmacytoid dendritic cells (pDCs), also known as type 2 DC precursors (pre-DC2) or natural interferon (IFN)-producing cells. These cells have the capacity to produce large amounts of interferon and block viral replication. Required for B-cell receptor (BCR) signaling, which is necessary for normal B-cell development and antigenic stimulation. The polypeptide is Transcription factor Spi-B (Spib) (Mus musculus (Mouse)).